The sequence spans 203 residues: UPF0637 protein SSP1683 (203 aa).

The protein belongs to the UPF0637 family.

This Staphylococcus saprophyticus subsp. saprophyticus (strain ATCC 15305 / DSM 20229 / NCIMB 8711 / NCTC 7292 / S-41) protein is UPF0637 protein SSP1683.